The sequence spans 154 residues: Peptide methionine sulfoxide reductase MsrB (154 aa).

A MsrB domain is found at 28–150 (DQQWREQLSE…NSVSLIFNKI (123 aa)). Zn(2+)-binding residues include C67, C70, C116, and C119. Residue C139 is the Nucleophile of the active site.

It belongs to the MsrB Met sulfoxide reductase family. Zn(2+) serves as cofactor.

The enzyme catalyses L-methionyl-[protein] + [thioredoxin]-disulfide + H2O = L-methionyl-(R)-S-oxide-[protein] + [thioredoxin]-dithiol. The protein is Peptide methionine sulfoxide reductase MsrB of Vibrio vulnificus (strain CMCP6).